The sequence spans 164 residues: Interferon gamma (164 aa).

The first 19 residues, 1–19 (MTCQTYNLFVLSVIMIYYG), serve as a signal peptide directing secretion. 2 N-linked (GlcNAc...) asparagine glycosylation sites follow: Asn42 and Asn61.

This sequence belongs to the type II (or gamma) interferon family. As to quaternary structure, homodimer.

It localises to the secreted. Its function is as follows. Produced by lymphocytes activated by specific antigens or mitogens. IFN-gamma, in addition to having antiviral activity, has important immunoregulatory functions. It is a potent activator of macrophages, it has antiproliferative effects on transformed cells and it can potentiate the antiviral and antitumor effects of the type I interferons. This Meleagris gallopavo (Wild turkey) protein is Interferon gamma (IFNG).